A 527-amino-acid chain; its full sequence is Succinate-semialdehyde dehydrogenase, mitochondrial (527 aa).

The transit peptide at 1-35 (MAMAMAMRRAAALGARHILAASSTSSSGVLLRRHM) directs the protein to the mitochondrion. Residues arginine 208, 223–226 (KPSE), and 276–281 (GSTAVG) each bind NAD(+). Residue arginine 208 coordinates substrate. Glutamate 298 serves as the catalytic Proton acceptor. Substrate-binding residues include arginine 326, cysteine 332, and serine 489. The Nucleophile role is filled by cysteine 332. Cysteines 332 and 334 form a disulfide.

The protein belongs to the aldehyde dehydrogenase family. In terms of assembly, homotetramer.

Its subcellular location is the mitochondrion matrix. The enzyme catalyses succinate semialdehyde + NAD(+) + H2O = succinate + NADH + 2 H(+). The protein operates within amino-acid degradation; 4-aminobutanoate degradation. With respect to regulation, redox-regulated. Inhibited under oxydizing conditions. In terms of biological role, oxidizes specifically succinate semialdehyde. Involved in plant response to environmental stress by preventing the accumulation of reactive oxygen species. This Oryza sativa subsp. japonica (Rice) protein is Succinate-semialdehyde dehydrogenase, mitochondrial (ALDH5F1).